Here is a 244-residue protein sequence, read N- to C-terminus: 5-oxoprolinase subunit A (244 aa).

The protein belongs to the LamB/PxpA family. In terms of assembly, forms a complex composed of PxpA, PxpB and PxpC.

The enzyme catalyses 5-oxo-L-proline + ATP + 2 H2O = L-glutamate + ADP + phosphate + H(+). Its function is as follows. Catalyzes the cleavage of 5-oxoproline to form L-glutamate coupled to the hydrolysis of ATP to ADP and inorganic phosphate. In Salmonella dublin (strain CT_02021853), this protein is 5-oxoprolinase subunit A.